A 430-amino-acid polypeptide reads, in one-letter code: Enolase (430 aa).

Q162 is a binding site for (2R)-2-phosphoglycerate. The active-site Proton donor is E204. Mg(2+) contacts are provided by D242, E289, and D316. The (2R)-2-phosphoglycerate site is built by K341, R370, S371, and K392. The active-site Proton acceptor is K341.

This sequence belongs to the enolase family. Mg(2+) serves as cofactor.

Its subcellular location is the cytoplasm. It is found in the secreted. The protein resides in the cell surface. The catalysed reaction is (2R)-2-phosphoglycerate = phosphoenolpyruvate + H2O. The protein operates within carbohydrate degradation; glycolysis; pyruvate from D-glyceraldehyde 3-phosphate: step 4/5. Catalyzes the reversible conversion of 2-phosphoglycerate (2-PG) into phosphoenolpyruvate (PEP). It is essential for the degradation of carbohydrates via glycolysis. The sequence is that of Enolase from Flavobacterium johnsoniae (strain ATCC 17061 / DSM 2064 / JCM 8514 / BCRC 14874 / CCUG 350202 / NBRC 14942 / NCIMB 11054 / UW101) (Cytophaga johnsonae).